The chain runs to 217 residues: Large ribosomal subunit protein bL25 (217 aa).

It belongs to the bacterial ribosomal protein bL25 family. CTC subfamily. Part of the 50S ribosomal subunit; part of the 5S rRNA/L5/L18/L25 subcomplex. Contacts the 5S rRNA. Binds to the 5S rRNA independently of L5 and L18.

In terms of biological role, this is one of the proteins that binds to the 5S RNA in the ribosome where it forms part of the central protuberance. The polypeptide is Large ribosomal subunit protein bL25 (Methylobacterium sp. (strain 4-46)).